The chain runs to 464 residues: Soluble pyridine nucleotide transhydrogenase (464 aa).

Residue 35–44 (DDRRQVGGNC) coordinates FAD.

It belongs to the class-I pyridine nucleotide-disulfide oxidoreductase family. Requires FAD as cofactor.

The protein resides in the cytoplasm. It carries out the reaction NAD(+) + NADPH = NADH + NADP(+). Conversion of NADPH, generated by peripheral catabolic pathways, to NADH, which can enter the respiratory chain for energy generation. The sequence is that of Soluble pyridine nucleotide transhydrogenase from Pseudomonas putida (strain ATCC 47054 / DSM 6125 / CFBP 8728 / NCIMB 11950 / KT2440).